Here is a 362-residue protein sequence, read N- to C-terminus: Mannose-1-phosphate guanyltransferase (362 aa).

Belongs to the transferase hexapeptide repeat family.

Its subcellular location is the cytoplasm. The enzyme catalyses alpha-D-mannose 1-phosphate + GTP + H(+) = GDP-alpha-D-mannose + diphosphate. Its pathway is nucleotide-sugar biosynthesis; GDP-alpha-D-mannose biosynthesis; GDP-alpha-D-mannose from alpha-D-mannose 1-phosphate (GTP route): step 1/1. Its function is as follows. Involved in cell wall synthesis where it is required for glycosylation. Involved in cell cycle progression through cell-size checkpoint. The chain is Mannose-1-phosphate guanyltransferase (MPG1) from Candida albicans (strain SC5314 / ATCC MYA-2876) (Yeast).